The following is an 802-amino-acid chain: Copper-exporting P-type ATPase (802 aa).

2 consecutive HMA domains span residues 5–70 and 72–138; these read KKTT…YGVA and ETVE…YDAS. The Cu(+) site is built by Cys-16, Cys-19, Cys-83, and Cys-86. The next 6 helical transmembrane spans lie at 161–181, 192–212, 224–244, 256–276, 411–431, and 438–458; these read LIISAVLSLPLLMLMFVHLFN, WFQFILATPVQFIIGWQFYVG, MDVLVAVGTSAAYFYSIYEMV, LYFETSAVLITLILFGKYLEA, YFVPIVVGIALLTFIVWITLV, and PALVASISVLVIACPCALGLA. The active-site 4-aspartylphosphate intermediate is the Asp-495. Mg(2+)-binding residues include Asp-690 and Asp-694. 2 helical membrane passes run 748–767 and 771–790; these read LFWAFGYNIAGIPIAALGLL and VAGAAMALSSVSVVTNALRL.

Belongs to the cation transport ATPase (P-type) (TC 3.A.3) family. Type IB subfamily.

It is found in the cell membrane. It catalyses the reaction Cu(+)(in) + ATP + H2O = Cu(+)(out) + ADP + phosphate + H(+). Involved in copper export. This chain is Copper-exporting P-type ATPase (copA), found in Staphylococcus aureus (strain MRSA252).